Here is a 570-residue protein sequence, read N- to C-terminus: Hydroxylamine reductase (570 aa).

C5, C8, C17, and C23 together coordinate [4Fe-4S] cluster. Hybrid [4Fe-2O-2S] cluster contacts are provided by H266, E290, C334, C425, C453, C478, E513, and K515. C425 carries the cysteine persulfide modification.

This sequence belongs to the HCP family. It depends on [4Fe-4S] cluster as a cofactor. The cofactor is hybrid [4Fe-2O-2S] cluster.

It is found in the cytoplasm. It catalyses the reaction A + NH4(+) + H2O = hydroxylamine + AH2 + H(+). Catalyzes the reduction of hydroxylamine to form NH(3) and H(2)O. In Clostridium botulinum (strain Langeland / NCTC 10281 / Type F), this protein is Hydroxylamine reductase.